A 165-amino-acid polypeptide reads, in one-letter code: Fibrinogen-binding protein (165 aa).

Positions 1 to 29 (MKNKLIAKSLLAIAAIGITTTTIASTADA) are cleaved as a signal peptide.

In terms of assembly, interacts with host fibrinogen alpha chain/FGA. Interacts with host complement protein C3.

It is found in the secreted. Its function is as follows. Extracellular fibrinogen-binding protein that plays an important role in virulence. By interacting with the alpha chain of fibrinogen and its derivative fibrin, enhances a non-functional interaction between fibrinogen and platelets and is responsible for repression of fibrinogen-dependent platelet aggregation. In addition, assembles a fibrinogen protective shield around the bacteria which results in impaired phagocytic clearance by the host. Mechanistically, interacts with host complement C3b deposited on the surface of the bacterium via its C-terminal and then recruits fibrinogen via its N-terminal. The polypeptide is Fibrinogen-binding protein (fib) (Staphylococcus aureus (strain MRSA252)).